A 735-amino-acid chain; its full sequence is Glycogen [starch] synthase, muscle (735 aa).

Ser-8 is subject to Phosphoserine; by AMPK and PKA. Ser-11 bears the Phosphoserine mark. Residue Lys-39 participates in UDP binding. UDP-alpha-D-glucose-binding residues include His-205 and Arg-211. 5 residues coordinate alpha-D-glucose 6-phosphate: His-291, Glu-292, Gln-294, His-297, and Lys-301. Arg-331 serves as a coordination point for UDP. Residue Arg-331 coordinates UDP-alpha-D-glucose. Phosphoserine is present on Ser-412. An alpha-D-glucose 6-phosphate-binding site is contributed by His-501. UDP-alpha-D-glucose contacts are provided by Glu-510, Trp-512, and Gly-513. UDP is bound at residue Thr-515. The alpha-D-glucose 6-phosphate site is built by Arg-582 and Arg-586. Positions 629–735 (DATQGYRYPR…PASSLGEERN (107 aa)) are disordered. Ser-641 is subject to Phosphoserine; by DYRK2, GSK3-alpha, GSK3-beta and PASK. Residues Ser-645 and Ser-649 each carry the phosphoserine; by GSK3-alpha and GSK3-beta modification. Residue Ser-652 is modified to Phosphoserine. Residue Ser-653 is modified to Phosphoserine; by GSK3-alpha and GSK3-beta. The residue at position 657 (Ser-657) is a Phosphoserine; by CK2. Residues 658 to 681 (EDEEEPRDGLPEEDGERYDEDEEA) show a composition bias toward acidic residues. A compositionally biased stretch (basic and acidic residues) spans 682 to 695 (AKDRRNIRAPEWPR). Ser-698 carries the post-translational modification Phosphoserine. Residues 698–735 (SCTSSSGGSKRSNSVDTSSLSTPSEPLSPASSLGEERN) show a composition bias toward low complexity. A Phosphothreonine modification is found at Thr-700. Residues Ser-709 and Ser-711 each carry the phosphoserine modification. Thr-719 is subject to Phosphothreonine. Phosphoserine occurs at positions 725 and 729.

The protein belongs to the glycosyltransferase 3 family. In terms of assembly, part of the GYS1-GYG1 complex, a heterooctamer composed of a tetramer of GYS1 and 2 dimers of GYG1, where each GYS1 protomer binds to one GYG1 subunit (via GYG1 C-terminus); the GYS1 tetramer may dissociate from GYG1 dimers to continue glycogen polymerization on its own. Phosphorylation at Ser-8 is required for modification of Ser-11 by casein kinase I. Post-translationally, phosphorylated at Ser-641 by PASK, leading to inactivation; phosphorylation by PASK is inhibited by glycogen. Dephosphorylation at Ser-641 and Ser-645 by PP1 activates the enzyme. Phosphorylation at Ser-8 by AMPK inactivates the enzyme activity. Phosphorylated at Ser-641 by DYRK2, leading to inactivation. Primed phosphorylation at Ser-657 (site 5) by CSNK2A1 and CSNK2A2 is required for inhibitory phosphorylation at Ser-641 (site 3a), Ser-645 (site 3b), Ser-649 (site 3c) and Ser-653 (site 4) by GSK3A and GSK3B.

The catalysed reaction is [(1-&gt;4)-alpha-D-glucosyl](n) + UDP-alpha-D-glucose = [(1-&gt;4)-alpha-D-glucosyl](n+1) + UDP + H(+). Its pathway is glycan biosynthesis; glycogen biosynthesis. With respect to regulation, allosteric activation by glucose-6-phosphate. Phosphorylation reduces the activity towards UDP-glucose. When in the non-phosphorylated state, glycogen synthase does not require glucose-6-phosphate as an allosteric activator; when phosphorylated it does. Its function is as follows. Glycogen synthase participates in the glycogen biosynthetic process along with glycogenin and glycogen branching enzyme. Extends the primer composed of a few glucose units formed by glycogenin by adding new glucose units to it. In this context, glycogen synthase transfers the glycosyl residue from UDP-Glc to the non-reducing end of alpha-1,4-glucan. The chain is Glycogen [starch] synthase, muscle from Oryctolagus cuniculus (Rabbit).